Here is a 376-residue protein sequence, read N- to C-terminus: Protein-glutamate methylesterase/protein-glutamine glutaminase (376 aa).

A Response regulatory domain is found at 4–121; the sequence is KVLVVDDSSF…ARNRDEAVSL (118 aa). Residue Asp-55 is modified to 4-aspartylphosphate. Residues 142–161 are disordered; it reads SSQSTSTVESRTATTRTATS. Low complexity predominate over residues 145-161; the sequence is STSTVESRTATTRTATS. Positions 183 to 376 constitute a CheB-type methylesterase domain; it reads TGKKYQLTAI…ERMLVEVGLK (194 aa). Active-site residues include Ser-195, His-222, and Asp-318.

This sequence belongs to the CheB family. Phosphorylated by CheA. Phosphorylation of the N-terminal regulatory domain activates the methylesterase activity.

It localises to the cytoplasm. It catalyses the reaction [protein]-L-glutamate 5-O-methyl ester + H2O = L-glutamyl-[protein] + methanol + H(+). The catalysed reaction is L-glutaminyl-[protein] + H2O = L-glutamyl-[protein] + NH4(+). Its function is as follows. Involved in chemotaxis. Part of a chemotaxis signal transduction system that modulates chemotaxis in response to various stimuli. Catalyzes the demethylation of specific methylglutamate residues introduced into the chemoreceptors (methyl-accepting chemotaxis proteins or MCP) by CheR. Also mediates the irreversible deamidation of specific glutamine residues to glutamic acid. This chain is Protein-glutamate methylesterase/protein-glutamine glutaminase, found in Aliivibrio fischeri (strain ATCC 700601 / ES114) (Vibrio fischeri).